The chain runs to 121 residues: Large ribosomal subunit protein uL18 (121 aa).

The protein belongs to the universal ribosomal protein uL18 family. Part of the 50S ribosomal subunit; part of the 5S rRNA/L5/L18/L25 subcomplex. Contacts the 5S and 23S rRNAs.

In terms of biological role, this is one of the proteins that bind and probably mediate the attachment of the 5S RNA into the large ribosomal subunit, where it forms part of the central protuberance. The protein is Large ribosomal subunit protein uL18 of Paraburkholderia phytofirmans (strain DSM 17436 / LMG 22146 / PsJN) (Burkholderia phytofirmans).